Consider the following 367-residue polypeptide: Succinyl-diaminopimelate desuccinylase (367 aa).

H64 is a binding site for Zn(2+). D66 is an active-site residue. D95 provides a ligand contact to Zn(2+). E125 functions as the Proton acceptor in the catalytic mechanism. The Zn(2+) site is built by E126, E154, and H339.

It belongs to the peptidase M20A family. DapE subfamily. As to quaternary structure, homodimer. Requires Zn(2+) as cofactor. Co(2+) serves as cofactor.

It carries out the reaction N-succinyl-(2S,6S)-2,6-diaminopimelate + H2O = (2S,6S)-2,6-diaminopimelate + succinate. It participates in amino-acid biosynthesis; L-lysine biosynthesis via DAP pathway; LL-2,6-diaminopimelate from (S)-tetrahydrodipicolinate (succinylase route): step 3/3. In terms of biological role, catalyzes the hydrolysis of N-succinyl-L,L-diaminopimelic acid (SDAP), forming succinate and LL-2,6-diaminopimelate (DAP), an intermediate involved in the bacterial biosynthesis of lysine and meso-diaminopimelic acid, an essential component of bacterial cell walls. The sequence is that of Succinyl-diaminopimelate desuccinylase from Sulfurovum sp. (strain NBC37-1).